A 173-amino-acid chain; its full sequence is Ribosomal RNA large subunit methyltransferase H (173 aa).

Leucine 89 and glycine 121 together coordinate S-adenosyl-L-methionine.

Belongs to the RNA methyltransferase RlmH family. Homodimer.

The protein localises to the cytoplasm. The enzyme catalyses pseudouridine(1915) in 23S rRNA + S-adenosyl-L-methionine = N(3)-methylpseudouridine(1915) in 23S rRNA + S-adenosyl-L-homocysteine + H(+). Functionally, specifically methylates the pseudouridine at position 1915 (m3Psi1915) in 23S rRNA. The chain is Ribosomal RNA large subunit methyltransferase H from Chelativorans sp. (strain BNC1).